The sequence spans 154 residues: 6,7-dimethyl-8-ribityllumazine synthase (154 aa).

5-amino-6-(D-ribitylamino)uracil-binding positions include F15, 47–49, and 71–73; these read TFD and AVI. (2S)-2-hydroxy-3-oxobutyl phosphate is bound at residue 76-77; it reads ET. H79 functions as the Proton donor in the catalytic mechanism. L104 serves as a coordination point for 5-amino-6-(D-ribitylamino)uracil. Residue R119 coordinates (2S)-2-hydroxy-3-oxobutyl phosphate.

Belongs to the DMRL synthase family.

The catalysed reaction is (2S)-2-hydroxy-3-oxobutyl phosphate + 5-amino-6-(D-ribitylamino)uracil = 6,7-dimethyl-8-(1-D-ribityl)lumazine + phosphate + 2 H2O + H(+). The protein operates within cofactor biosynthesis; riboflavin biosynthesis; riboflavin from 2-hydroxy-3-oxobutyl phosphate and 5-amino-6-(D-ribitylamino)uracil: step 1/2. Its function is as follows. Catalyzes the formation of 6,7-dimethyl-8-ribityllumazine by condensation of 5-amino-6-(D-ribitylamino)uracil with 3,4-dihydroxy-2-butanone 4-phosphate. This is the penultimate step in the biosynthesis of riboflavin. The polypeptide is 6,7-dimethyl-8-ribityllumazine synthase (Saccharolobus islandicus (strain M.16.27) (Sulfolobus islandicus)).